A 200-amino-acid chain; its full sequence is NAD(P)H dehydrogenase (quinone) (200 aa).

The Flavodoxin-like domain occupies 4–191 (VLVLYYSSYG…DIARYQGKHV (188 aa)). Residues 10 to 15 (SSYGHV) and 79 to 81 (TRF) contribute to the FMN site. Residue Tyr12 participates in NAD(+) binding. Trp99 lines the substrate pocket. FMN-binding positions include 114–120 (STGTQHG) and His135.

The protein belongs to the WrbA family. The cofactor is FMN.

The catalysed reaction is a quinone + NADH + H(+) = a quinol + NAD(+). The enzyme catalyses a quinone + NADPH + H(+) = a quinol + NADP(+). This is NAD(P)H dehydrogenase (quinone) from Burkholderia orbicola (strain MC0-3).